Reading from the N-terminus, the 467-residue chain is Transcriptional modulator WTM2 (467 aa).

The segment covering 1-12 has biased composition (low complexity); that stretch reads MAKSKSSQGASG. Disordered regions lie at residues 1–22 and 84–121; these read MAKS…PSLY and TFYD…AFQD. The span at 87–100 shows a compositional bias: acidic residues; it reads DDDDDDDNDDDDEE. 3 WD repeats span residues 244 to 282, 287 to 327, and 349 to 389; these read PGTN…KPLW, PKNG…LATT, and SGGD…SRND.

Transcriptional modulator with roles in meiotic regulation and silencing. This Saccharomyces cerevisiae (strain ATCC 204508 / S288c) (Baker's yeast) protein is Transcriptional modulator WTM2 (WTM2).